The following is a 509-amino-acid chain: ESX-2 secretion system protein eccD2 (509 aa).

Transmembrane regions (helical) follow at residues 135–155 (LTAA…VLAL), 170–190 (AMAG…WWGW), 196–216 (LFSG…ACAP), 222–242 (AAHA…IGVA), 248–268 (QTAV…VAAV), 281–301 (ICVL…ALWV), 364–384 (VQVG…WGVL), 389–409 (PWAW…ITQG), 418–438 (AVAL…KYAL), 449–469 (LWPA…ALVV), and 487–507 (VLAM…FAWL).

It belongs to the EccD/Snm4 family. In terms of assembly, part of the ESX-2 / type VII secretion system (T7SS), which is composed of cytosolic and membrane components.

The protein localises to the cell membrane. The sequence is that of ESX-2 secretion system protein eccD2 (eccD2) from Mycobacterium tuberculosis (strain CDC 1551 / Oshkosh).